The following is a 121-amino-acid chain: MARIAGVDLPKKKRIEYGLTYIYGIGLFTSRKILDKVGISYDKRVHELSEDEAAAIRKEIQENYMVEGDLRKQVAMDIKALMDLGSFRGLRHRKGLPVRGQKTKTNARTRKGKRKTVGAKS.

Residues 95–121 (GLPVRGQKTKTNARTRKGKRKTVGAKS) are disordered.

It belongs to the universal ribosomal protein uS13 family. Part of the 30S ribosomal subunit. Forms a loose heterodimer with protein S19. Forms two bridges to the 50S subunit in the 70S ribosome.

Located at the top of the head of the 30S subunit, it contacts several helices of the 16S rRNA. In the 70S ribosome it contacts the 23S rRNA (bridge B1a) and protein L5 of the 50S subunit (bridge B1b), connecting the 2 subunits; these bridges are implicated in subunit movement. Contacts the tRNAs in the A and P-sites. This chain is Small ribosomal subunit protein uS13, found in Campylobacter jejuni subsp. jejuni serotype O:6 (strain 81116 / NCTC 11828).